Reading from the N-terminus, the 314-residue chain is Nodulation protein D 2 (314 aa).

An HTH lysR-type domain is found at 6-63; that stretch reads LDLNLLVVLDALMTERNLTAAARSINLSQPAMSAAVARLRTNFRDDLFAMAGREFIPT. The H-T-H motif DNA-binding region spans 23-42; it reads LTAAARSINLSQPAMSAAVA.

It belongs to the LysR transcriptional regulatory family.

Its function is as follows. NodD regulates the expression of the nodABCFE genes which encode other nodulation proteins. NodD is also a negative regulator of its own expression. Binds flavonoids as inducers. The protein is Nodulation protein D 2 (nodD2) of Rhizobium tropici.